The chain runs to 116 residues: Probable early E4 11 kDa protein (116 aa).

The protein is Probable early E4 11 kDa protein of Human adenovirus A serotype 12 (HAdV-12).